The sequence spans 1846 residues: Unconventional myosin-Vb (1846 aa).

Positions 8-60 (SRYTRVWIPDPDEVWRSAELTKDYKDGDESLQLRLEDDTILDYPIDVQNNQVP) constitute a Myosin N-terminal SH3-like domain. A requires for interaction with LIMA1 region spans residues 21-40 (VWRSAELTKDYKDGDESLQL). The Myosin motor domain maps to 69-763 (VGENDLTALS…QVAYLEKLRA (695 aa)). 163–170 (GESGAGKT) provides a ligand contact to ATP. The interval 599–629 (VPATNTAKSRSSSKINVRSSRPLMKAPNKEH) is disordered. Low complexity predominate over residues 607–619 (SRSSSKINVRSSR). Residues 641 to 663 (LNLLMETLNATTPHYVRCIKPND) are actin-binding. IQ domains lie at 767 to 788 (REAT…KYRR), 789 to 813 (LRAA…EHLR), 814 to 837 (RTRA…YCRV), 838 to 861 (RRAA…PPVL), 862 to 884 (TEHK…HFQR), and 885 to 914 (QRDA…EARS). Coiled coils occupy residues 915 to 1272 (AEHL…ADQR) and 1334 to 1450 (LKQV…RHHE). Residues 1088 to 1122 (RDEQQTPGHRKNPSNQSSLESDSNYPSISTSEIGD) are disordered. Positions 1100–1120 (PSNQSSLESDSNYPSISTSEI) are enriched in polar residues. The residue at position 1444 (Ser-1444) is a Phosphoserine. One can recognise a Dilute domain in the interval 1524–1801 (SSTINGIKKV…IRTIQAQLQE (278 aa)).

Belongs to the TRAFAC class myosin-kinesin ATPase superfamily. Myosin family. Component of the CART complex, at least composed of ACTN4, HGS/HRS, MYO5B and TRIM3. Interacts with RAB11FIP2. Interacts with RAB11A and RAB8A. Found in a complex with CFTR and RAB11A. Interacts with NPC1L1. Interacts with LIMA1.

The protein localises to the cytoplasm. May be involved in vesicular trafficking via its association with the CART complex. The CART complex is necessary for efficient transferrin receptor recycling but not for EGFR degradation. Required in a complex with RAB11A and RAB11FIP2 for the transport of NPC1L1 to the plasma membrane. Together with RAB11A participates in CFTR trafficking to the plasma membrane and TF (transferrin) recycling in nonpolarized cells. Together with RAB11A and RAB8A participates in epithelial cell polarization. Together with RAB25 regulates transcytosis. Required for proper localization of bile salt export pump ABCB11 at the apical/canalicular plasma membrane of hepatocytes. This Rattus norvegicus (Rat) protein is Unconventional myosin-Vb (Myo5b).